We begin with the raw amino-acid sequence, 368 residues long: COP9 signalosome complex subunit 5 (368 aa).

Positions 56–193 constitute an MPN domain; that stretch reads IKISAIALLK…IGAFRTYPEG (138 aa). Zn(2+) contacts are provided by His-139, His-141, and Asp-152. The short motif at 139–152 is the JAMM motif element; that stretch reads HSHPGYGCWLSGID. The tract at residues 347-368 is disordered; sequence TEPEKAGPSPSAPEPAVEMADA.

This sequence belongs to the peptidase M67A family. CSN5 subfamily. In terms of assembly, component of the CSN complex, probably composed of csn-1, csn-2, csn-3, csn-4, csn-5, csn-6 and csn-7. Within the complex it probably interacts directly with csn-1. Interacts with glh-1 and glh-3. Interacts with lag-1. Interacts with kgb-1. It depends on a divalent metal cation as a cofactor.

It is found in the cytoplasm. The protein resides in the nucleus. In terms of biological role, probable protease subunit of the COP9 signalosome complex (CSN), a complex involved in various cellular and developmental processes. The CSN complex is an essential regulator of the ubiquitin (Ubl) conjugation pathway by mediating the deneddylation of the cullin subunits of the SCF-type E3 ligase complexes, leading to decrease the Ubl ligase activity of SCF. In the complex, it probably acts as the catalytic center that mediates the cleavage of Nedd8 from cullins. It however has no metalloprotease activity by itself and requires the other subunits of the CSN complex. The CSN complex plays an essential role in embryogenesis and oogenesis and is required to regulate microtubule stability in the early embryo. Mediates mei-3/katanin targeting for degradation at the meiosis to mitosis transition via deneddylation of cul-3. May stabilize glh-1 protein levels by antagonizing kgb-1. The polypeptide is COP9 signalosome complex subunit 5 (csn-5) (Caenorhabditis elegans).